The chain runs to 419 residues: Tyrosine--tRNA ligase (419 aa).

Position 34 (tyrosine 34) interacts with L-tyrosine. The 'HIGH' region motif lies at 39–48 (PTADSLHLGN). Positions 169 and 173 each coordinate L-tyrosine. The short motif at 229–233 (KFGKS) is the 'KMSKS' region element. Lysine 232 provides a ligand contact to ATP. An S4 RNA-binding domain is found at 353–419 (LTLIELLISV…GKKKNFVLTY (67 aa)).

It belongs to the class-I aminoacyl-tRNA synthetase family. TyrS type 1 subfamily. In terms of assembly, homodimer.

The protein resides in the cytoplasm. The enzyme catalyses tRNA(Tyr) + L-tyrosine + ATP = L-tyrosyl-tRNA(Tyr) + AMP + diphosphate + H(+). Its function is as follows. Catalyzes the attachment of tyrosine to tRNA(Tyr) in a two-step reaction: tyrosine is first activated by ATP to form Tyr-AMP and then transferred to the acceptor end of tRNA(Tyr). This chain is Tyrosine--tRNA ligase, found in Lactococcus lactis subsp. cremoris (strain MG1363).